We begin with the raw amino-acid sequence, 361 residues long: Chorismate synthase (361 aa).

Residues 37-59 are disordered; sequence TEEDLQHDLDRRRPGTSRYTTPR. A compositionally biased stretch (basic and acidic residues) spans 40-49; it reads DLQHDLDRRR. Residues Arg48 and Arg54 each coordinate NADP(+). FMN-binding positions include 125–127, 238–239, Gly278, 293–297, and Arg319; these read RSS, NA, and KPTSS.

The protein belongs to the chorismate synthase family. As to quaternary structure, homotetramer. The cofactor is FMNH2.

It carries out the reaction 5-O-(1-carboxyvinyl)-3-phosphoshikimate = chorismate + phosphate. It participates in metabolic intermediate biosynthesis; chorismate biosynthesis; chorismate from D-erythrose 4-phosphate and phosphoenolpyruvate: step 7/7. Functionally, catalyzes the anti-1,4-elimination of the C-3 phosphate and the C-6 proR hydrogen from 5-enolpyruvylshikimate-3-phosphate (EPSP) to yield chorismate, which is the branch point compound that serves as the starting substrate for the three terminal pathways of aromatic amino acid biosynthesis. This reaction introduces a second double bond into the aromatic ring system. The sequence is that of Chorismate synthase from Erwinia tasmaniensis (strain DSM 17950 / CFBP 7177 / CIP 109463 / NCPPB 4357 / Et1/99).